Consider the following 357-residue polypeptide: Peptide chain release factor 1 (357 aa).

N5-methylglutamine is present on Q234. The segment covering 284-307 has biased composition (basic and acidic residues); that stretch reads KKQEQRSNDRKQQVGSGDRSERIR. The segment at 284-313 is disordered; that stretch reads KKQEQRSNDRKQQVGSGDRSERIRTYNFPQ.

Belongs to the prokaryotic/mitochondrial release factor family. Post-translationally, methylated by PrmC. Methylation increases the termination efficiency of RF1.

It is found in the cytoplasm. Its function is as follows. Peptide chain release factor 1 directs the termination of translation in response to the peptide chain termination codons UAG and UAA. The chain is Peptide chain release factor 1 from Borrelia turicatae (strain 91E135).